The following is a 221-amino-acid chain: Thymidylate kinase (221 aa).

An ATP-binding site is contributed by 12–19; the sequence is GIDGAGKS.

This sequence belongs to the thymidylate kinase family.

It carries out the reaction dTMP + ATP = dTDP + ADP. Functionally, phosphorylation of dTMP to form dTDP in both de novo and salvage pathways of dTTP synthesis. This is Thymidylate kinase from Paracidovorax citrulli (strain AAC00-1) (Acidovorax citrulli).